The following is a 269-amino-acid chain: 3-methyl-2-oxobutanoate hydroxymethyltransferase (269 aa).

2 residues coordinate Mg(2+): Asp51 and Asp90. Residues 51-52, Asp90, and Lys120 contribute to the 3-methyl-2-oxobutanoate site; that span reads DS. Glu122 provides a ligand contact to Mg(2+). Catalysis depends on Glu187, which acts as the Proton acceptor.

Belongs to the PanB family. Homodecamer; pentamer of dimers. Mg(2+) is required as a cofactor.

It localises to the cytoplasm. It carries out the reaction 3-methyl-2-oxobutanoate + (6R)-5,10-methylene-5,6,7,8-tetrahydrofolate + H2O = 2-dehydropantoate + (6S)-5,6,7,8-tetrahydrofolate. It participates in cofactor biosynthesis; (R)-pantothenate biosynthesis; (R)-pantoate from 3-methyl-2-oxobutanoate: step 1/2. Functionally, catalyzes the reversible reaction in which hydroxymethyl group from 5,10-methylenetetrahydrofolate is transferred onto alpha-ketoisovalerate to form ketopantoate. In Tropheryma whipplei (strain TW08/27) (Whipple's bacillus), this protein is 3-methyl-2-oxobutanoate hydroxymethyltransferase.